The primary structure comprises 37 residues: Large ribosomal subunit protein bL36c (37 aa).

The protein belongs to the bacterial ribosomal protein bL36 family.

Its subcellular location is the plastid. It localises to the chloroplast. The chain is Large ribosomal subunit protein bL36c from Piper cenocladum (Ant piper).